A 350-amino-acid polypeptide reads, in one-letter code: Biotin synthase (350 aa).

Positions 41–268 (NEVQISRLLS…KSRVRLSAGR (228 aa)) constitute a Radical SAM core domain. The [4Fe-4S] cluster site is built by cysteine 56, cysteine 60, and cysteine 63. [2Fe-2S] cluster is bound by residues cysteine 100, cysteine 131, cysteine 191, and arginine 263.

It belongs to the radical SAM superfamily. Biotin synthase family. Homodimer. [4Fe-4S] cluster is required as a cofactor. The cofactor is [2Fe-2S] cluster.

The catalysed reaction is (4R,5S)-dethiobiotin + (sulfur carrier)-SH + 2 reduced [2Fe-2S]-[ferredoxin] + 2 S-adenosyl-L-methionine = (sulfur carrier)-H + biotin + 2 5'-deoxyadenosine + 2 L-methionine + 2 oxidized [2Fe-2S]-[ferredoxin]. It participates in cofactor biosynthesis; biotin biosynthesis; biotin from 7,8-diaminononanoate: step 2/2. Catalyzes the conversion of dethiobiotin (DTB) to biotin by the insertion of a sulfur atom into dethiobiotin via a radical-based mechanism. The polypeptide is Biotin synthase (Shewanella piezotolerans (strain WP3 / JCM 13877)).